The primary structure comprises 315 residues: 2,3-dihydroxyphenylpropionate/2,3-dihydroxicinnamic acid 1,2-dioxygenase (315 aa).

The Proton donor role is filled by histidine 118. The active-site Proton acceptor is histidine 182.

This sequence belongs to the LigB/MhpB extradiol dioxygenase family. In terms of assembly, homotetramer. Fe(2+) is required as a cofactor.

The catalysed reaction is 3-(2,3-dihydroxyphenyl)propanoate + O2 = (2Z,4E)-2-hydroxy-6-oxonona-2,4-dienedioate + H(+). The enzyme catalyses (2E)-3-(2,3-dihydroxyphenyl)prop-2-enoate + O2 = (2Z,4E,7E)-2-hydroxy-6-oxonona-2,4,7-trienedioate + H(+). Its pathway is aromatic compound metabolism; 3-phenylpropanoate degradation. In terms of biological role, catalyzes the non-heme iron(II)-dependent oxidative cleavage of 2,3-dihydroxyphenylpropionic acid and 2,3-dihydroxicinnamic acid into 2-hydroxy-6-ketononadienedioate and 2-hydroxy-6-ketononatrienedioate, respectively. This chain is 2,3-dihydroxyphenylpropionate/2,3-dihydroxicinnamic acid 1,2-dioxygenase, found in Mycolicibacterium gilvum (strain PYR-GCK) (Mycobacterium gilvum (strain PYR-GCK)).